Here is a 360-residue protein sequence, read N- to C-terminus: MTATLQRRASANLWERFCAWITSTENRLYIGWFGVLMIPCLLTATCVFIIAFVAAPPVDIDGIREPVSGSLFYGNNIITGAVVPTSNAIGLHFYPIWEAASVDEWLYNGGPYQLIVLHFLIGVASYMGREWELSYRLGMRPWICVAFSAPVAAATAVFLIYPIGQGSFSDGMPLGISGTFNFMLVFQAEHNILMHPFHMAGVAGVFGGALFSAMHGSLVTSSLIRETSENESLNNGYKFGQEEETYNIVAAHGYFGRLIFQYASFNNSRSLHFFLGAWPVVGIWLTAIGISTMAFNLNGFNFNQSVVDSEGRVINTWADILNRANLGIEVMHERNAHNFPLDLASNSVVPVALTAPSVEA.

3 helical membrane-spanning segments follow: residues Tyr29 to Cys46, His118 to Leu133, and Trp142 to Ala156. His118 is a binding site for chlorophyll a. Tyr126 provides a ligand contact to pheophytin a. Positions 170 and 189 each coordinate [CaMn4O5] cluster. A helical transmembrane segment spans residues Phe197–Leu218. A chlorophyll a-binding site is contributed by His198. A quinone-binding positions include His215 and Ser264–Phe265. Fe cation is bound at residue His215. His272 serves as a coordination point for Fe cation. The chain crosses the membrane as a helical span at residues Phe274–Ile288. His332, Glu333, Asp342, and Ala344 together coordinate [CaMn4O5] cluster. The propeptide occupies Ser345–Ala360.

Belongs to the reaction center PufL/M/PsbA/D family. In terms of assembly, PSII is composed of 1 copy each of membrane proteins PsbA, PsbB, PsbC, PsbD, PsbE, PsbF, PsbH, PsbI, PsbJ, PsbK, PsbL, PsbM, PsbT, PsbX, PsbY, PsbZ, Psb30/Ycf12, at least 3 peripheral proteins of the oxygen-evolving complex and a large number of cofactors. It forms dimeric complexes. It depends on The D1/D2 heterodimer binds P680, chlorophylls that are the primary electron donor of PSII, and subsequent electron acceptors. It shares a non-heme iron and each subunit binds pheophytin, quinone, additional chlorophylls, carotenoids and lipids. D1 provides most of the ligands for the Mn4-Ca-O5 cluster of the oxygen-evolving complex (OEC). There is also a Cl(-1) ion associated with D1 and D2, which is required for oxygen evolution. The PSII complex binds additional chlorophylls, carotenoids and specific lipids. as a cofactor. Post-translationally, tyr-161 forms a radical intermediate that is referred to as redox-active TyrZ, YZ or Y-Z. In terms of processing, C-terminally processed by CTPA; processing is essential to allow assembly of the oxygen-evolving complex and thus photosynthetic growth.

The protein resides in the plastid. Its subcellular location is the chloroplast thylakoid membrane. It catalyses the reaction 2 a plastoquinone + 4 hnu + 2 H2O = 2 a plastoquinol + O2. Photosystem II (PSII) is a light-driven water:plastoquinone oxidoreductase that uses light energy to abstract electrons from H(2)O, generating O(2) and a proton gradient subsequently used for ATP formation. It consists of a core antenna complex that captures photons, and an electron transfer chain that converts photonic excitation into a charge separation. The D1/D2 (PsbA/PsbD) reaction center heterodimer binds P680, the primary electron donor of PSII as well as several subsequent electron acceptors. The polypeptide is Photosystem II protein D1 (Cyanidioschyzon merolae (strain NIES-3377 / 10D) (Unicellular red alga)).